We begin with the raw amino-acid sequence, 83 residues long: RNA-binding protein Hfq (83 aa).

The Sm domain maps to Asp-9–Val-69.

It belongs to the Hfq family. As to quaternary structure, homohexamer.

RNA chaperone that binds small regulatory RNA (sRNAs) and mRNAs to facilitate mRNA translational regulation in response to envelope stress, environmental stress and changes in metabolite concentrations. Also binds with high specificity to tRNAs. The sequence is that of RNA-binding protein Hfq from Exiguobacterium sibiricum (strain DSM 17290 / CCUG 55495 / CIP 109462 / JCM 13490 / 255-15).